The following is a 106-amino-acid chain: ATP-dependent Clp protease adapter protein ClpS (106 aa).

It belongs to the ClpS family. As to quaternary structure, binds to the N-terminal domain of the chaperone ClpA.

Involved in the modulation of the specificity of the ClpAP-mediated ATP-dependent protein degradation. The protein is ATP-dependent Clp protease adapter protein ClpS of Edwardsiella ictaluri (strain 93-146).